Consider the following 620-residue polypeptide: MAKHQFQTEIGQLLKLMTHSLYSNKEIFIRELISNASDALDKFNYLSLTDEKFKEENWSGKISIKLDKDDNSLTIGDNGIGMNEEDLMDNLGTIAKSGTKAFMENLTGDAKKDSNLIGQFGVGFYSVFMVAEKVDVISKKAGEEQAYMFSTDGTGEYEVKPVTKDEHGTVIYIKLKEDEKEFLDKWRVQEVVKKYSNHIAYPIILNYTEEETTGEGDEKETKTVQKSEQINEATALWTLPKSELKEEDYIEFYKTISHGDDEPLTYLHNKVEGANEFTTLFYIPKKAPMDLYRADYQPGVKLYVKRVFITDDDKELLPPYLRFVRGIIDSEDLPLNVSRELLQENRILANIKQNSVKKILGAIKKLDSEKMEIFTEQYNRVIKEGIYTDHTNKETLLGIVRYKSSSEEGMVSLDDYISRGDSEKKEIYYIVGADEKVLRNSPLLEAYKKANIEVLIMDDEEVDSIVAPMIGSYKEWTFKDITTIDAPDSKTEEEKEEISKEFKPLTDKIKEVLGDEVKEVKISTRLTESPSCVLKDASDPMAGMAAMFAQMGQEMPEIPLILEINPEHEMIKKLDKVEDESLFNDLSWILLDSAKLSEGLEPKDKGAFAHRVASLATKAL.

Positions 1 to 339 are a; substrate-binding; the sequence is MAKHQFQTEI…SEDLPLNVSR (339 aa). A b region spans residues 340 to 546; it reads ELLQENRILA…ASDPMAGMAA (207 aa). The segment at 547-620 is c; it reads MFAQMGQEMP…RVASLATKAL (74 aa).

Belongs to the heat shock protein 90 family. As to quaternary structure, homodimer.

The protein localises to the cytoplasm. In terms of biological role, molecular chaperone. Has ATPase activity. In Sulfurovum sp. (strain NBC37-1), this protein is Chaperone protein HtpG.